The following is a 298-amino-acid chain: Palmitoyl-protein thioesterase 1 (298 aa).

An N-terminal signal peptide occupies residues 1–16 (MRYFPLLLCLLAITTA). Asparagine 20 carries an N-linked (GlcNAc...) asparagine glycan. 3 disulfide bridges follow: cysteine 37–cysteine 38, cysteine 88–cysteine 120, and cysteine 144–cysteine 151. The active-site Nucleophile is the serine 107. The active site involves aspartate 224. N-linked (GlcNAc...) asparagine glycosylation occurs at asparagine 250. Histidine 280 is a catalytic residue.

It belongs to the palmitoyl-protein thioesterase family.

It catalyses the reaction S-hexadecanoyl-L-cysteinyl-[protein] + H2O = L-cysteinyl-[protein] + hexadecanoate + H(+). In terms of biological role, removes thioester-linked fatty acyl groups such as palmitate (hexadecanoate) from modified cysteine residues in proteins or peptides. This chain is Palmitoyl-protein thioesterase 1 (ppt-1), found in Caenorhabditis elegans.